The following is a 49-amino-acid chain: Osteocalcin (49 aa).

In terms of domain architecture, Gla spans 1–47; sequence YLDHWLGAPAPYPDPLEPRREVCELNPDCDELADHIGFQEAYRRFYG. Proline 9 carries the post-translational modification Hydroxyproline. Ca(2+) is bound by residues glutamate 17, glutamate 21, glutamate 24, and aspartate 30. Residues glutamate 17, glutamate 21, and glutamate 24 each carry the 4-carboxyglutamate modification. A disulfide bridge connects residues cysteine 23 and cysteine 29.

It belongs to the osteocalcin/matrix Gla protein family. Post-translationally, gamma-carboxyglutamate residues are formed by vitamin K dependent carboxylation by GGCX. These residues are essential for the binding of calcium. Decarboxylation promotes the hormone activity.

The protein localises to the secreted. Its function is as follows. The carboxylated form is one of the main organic components of the bone matrix, which constitutes 1-2% of the total bone protein. It acts as a negative regulator of bone formation and is required to limit bone formation without impairing bone resorption or mineralization. The carboxylated form binds strongly to apatite and calcium. Functionally, the uncarboxylated form acts as a hormone secreted by osteoblasts, which regulates different cellular processes, such as energy metabolism, male fertility and brain development. Regulates of energy metabolism by acting as a hormone favoring pancreatic beta-cell proliferation, insulin secretion and sensitivity and energy expenditure. Uncarboxylated osteocalcin hormone also promotes testosterone production in the testes: acts as a ligand for G protein-coupled receptor GPRC6A at the surface of Leydig cells, initiating a signaling response that promotes the expression of enzymes required for testosterone synthesis in a CREB-dependent manner. Also acts as a regulator of brain development: osteocalcin hormone crosses the blood-brain barrier and acts as a ligand for GPR158 on neurons, initiating a signaling response that prevents neuronal apoptosis in the hippocampus, favors the synthesis of all monoamine neurotransmitters and inhibits that of gamma-aminobutyric acid (GABA). Osteocalcin also crosses the placenta during pregnancy and maternal osteocalcin is required for fetal brain development. This is Osteocalcin (BGLAP) from Equus caballus (Horse).